A 125-amino-acid polypeptide reads, in one-letter code: Large ribosomal subunit protein bL12 (125 aa).

This sequence belongs to the bacterial ribosomal protein bL12 family. In terms of assembly, homodimer. Part of the ribosomal stalk of the 50S ribosomal subunit. Forms a multimeric L10(L12)X complex, where L10 forms an elongated spine to which 2 to 4 L12 dimers bind in a sequential fashion. Binds GTP-bound translation factors.

Functionally, forms part of the ribosomal stalk which helps the ribosome interact with GTP-bound translation factors. Is thus essential for accurate translation. The sequence is that of Large ribosomal subunit protein bL12 from Thermus thermophilus (strain ATCC BAA-163 / DSM 7039 / HB27).